We begin with the raw amino-acid sequence, 536 residues long: Beta-hexosaminidase subunit beta (536 aa).

An N-terminal signal peptide occupies residues 1-31 (MPQSPRSAPGLLLLQALVSLVSLALVAPARL). The N-linked (GlcNAc...) asparagine glycan is linked to Asn-63. Cys-70 and Cys-116 are disulfide-bonded. 2 N-linked (GlcNAc...) asparagine glycosylation sites follow: Asn-169 and Asn-306. Intrachain disulfides connect Cys-288–Cys-339 and Cys-513–Cys-530. The active-site Proton donor is the Glu-334.

Belongs to the glycosyl hydrolase 20 family. As to quaternary structure, there are 3 forms of beta-hexosaminidase: hexosaminidase A is a heterodimer composed of one subunit alpha and one subunit beta (chain A and B); hexosaminidase B is a homodimer of two beta subunits (two chains A and B); hexosaminidase S is a homodimer of two alpha subunits. The composition of the dimer (isozyme A versus isozyme S) has a significant effect on the substrate specificity of the alpha subunit active site.

Its subcellular location is the lysosome. The protein resides in the cytoplasmic vesicle. The protein localises to the secretory vesicle. It is found in the cortical granule. It catalyses the reaction Hydrolysis of terminal non-reducing N-acetyl-D-hexosamine residues in N-acetyl-beta-D-hexosaminides.. The enzyme catalyses N-acetyl-beta-D-galactosaminyl-(1-&gt;4)-beta-D-3-sulfogalactosyl-(1-&gt;4)-beta-D-glucosyl-(1&lt;-&gt;1')-ceramide + H2O = a beta-D-3-sulfogalactosyl-(1-&gt;4)-beta-D-glucosyl-(1&lt;-&gt;1')-ceramide + N-acetyl-beta-D-galactosamine. The catalysed reaction is a ganglioside GM2 (d18:1(4E)) + H2O = a ganglioside GM3 (d18:1(4E)) + N-acetyl-beta-D-galactosamine. It carries out the reaction a ganglioside GM2 + H2O = a ganglioside GM3 + N-acetyl-beta-D-galactosamine. It catalyses the reaction beta-D-GalNAc-(1-&gt;4)-alpha-L-IdoA-(1-&gt;3)-beta-D-GalNAc-4-sulfate-(1-&gt;4)-alpha-L-IdoA-(1-&gt;3)-D-GalNAc-4-sulfate + H2O = alpha-L-IdoA-(1-&gt;3)-beta-D-GalNAc-4-sulfate-(1-&gt;4)-alpha-L-IdoA-(1-&gt;3)-D-GalNAc-4-sulfate + N-acetyl-D-galactosamine. The enzyme catalyses N-acetyl-beta-D-6-sulfogalactosaminyl-(1-&gt;4)-alpha-L-iduronyl-(1-&gt;3)-N-acetyl-D-6-sulfogalactosamine + H2O = alpha-L-iduronyl-(1-&gt;3)-N-acetyl-D-6-sulfogalactosamine + N-acetyl-D-6-sulfogalactosamine. Its activity is regulated as follows. Addition of GM2A stimulates the hydrolysis of sulfated glycosphingolipid SM2 and the ganglioside GM2. Hydrolyzes the non-reducing end N-acetyl-D-hexosamine and/or sulfated N-acetyl-D-hexosamine of glycoconjugates, such as the oligosaccharide moieties from proteins and neutral glycolipids, or from certain mucopolysaccharides. The isozyme B does not hydrolyze each of these substrates, however hydrolyzes efficiently neutral oligosaccharide. Only the isozyme A is responsible for the degradation of GM2 gangliosides in the presence of GM2A. During fertilization is responsible, at least in part, for the zona block to polyspermy. Present in the cortical granules of non-activated oocytes, is exocytosed during the cortical reaction in response to oocyte activation and inactivates the sperm galactosyltransferase-binding site, accounting for the block in sperm binding to the zona pellucida. This Mus musculus (Mouse) protein is Beta-hexosaminidase subunit beta.